A 681-amino-acid chain; its full sequence is Replication protein E1 (681 aa).

Residues 88-90 (KRK) carry the Nuclear localization signal motif. 3 positions are modified to phosphoserine; by host: S94, S98, and S111. Residues 110–119 (LSPRLDAIKL) carry the Nuclear export signal motif. Residues 124–221 (AKAKRRLFEL…SDLQSTSTGK (98 aa)) are disordered. 2 stretches are compositionally biased toward polar residues: residues 138 to 158 (YGQT…SSET) and 170 to 184 (VVQS…NGRQ). Basic and acidic residues predominate over residues 185 to 207 (NNDEGSGRNVGEHGSQEEERAGG). A DNA-binding region region spans residues 218-384 (STGKGAGGVV…QTMVGHAMED (167 aa)). The 151-residue stretch at 483–633 (VEFIPFLCAF…FPVTTQGEPM (151 aa)) folds into the SF3 helicase domain. Residue 509–516 (GPADTGKS) coordinates ATP. K590 participates in a covalent cross-link: Glycyl lysine isopeptide (Lys-Gly) (interchain with G-Cter in SUMO). The tract at residues 657 to 681 (PEDEEEHGNPSEPFRCVPGQNARTI) is disordered.

This sequence belongs to the papillomaviridae E1 protein family. In terms of assembly, can form hexamers. Interacts with E2 protein; this interaction increases E1 DNA binding specificity. Interacts with host DNA polymerase subunit POLA2. Interacts with host single stranded DNA-binding protein RPA1. Interacts with host TOP1; this interaction stimulates the enzymatic activity of TOP1. In terms of processing, phosphorylated. Post-translationally, sumoylated.

The protein resides in the host nucleus. The catalysed reaction is Couples ATP hydrolysis with the unwinding of duplex DNA by translocating in the 3'-5' direction.. It carries out the reaction ATP + H2O = ADP + phosphate + H(+). In terms of biological role, ATP-dependent DNA 3'-5' helicase required for initiation of viral DNA replication. It forms a complex with the viral E2 protein. The E1-E2 complex binds to the replication origin which contains binding sites for both proteins. During the initial step, a dimer of E1 interacts with a dimer of protein E2 leading to a complex that binds the viral origin of replication with high specificity. Then, a second dimer of E1 displaces the E2 dimer in an ATP-dependent manner to form the E1 tetramer. Following this, two E1 monomers are added to each half of the site, which results in the formation of two E1 trimers on the viral ori. Subsequently, two hexamers will be created. The double hexamer acts as a bi-directional helicase machinery and unwinds the viral DNA and then recruits the host DNA polymerase to start replication. The sequence is that of Replication protein E1 from Homo sapiens (Human).